The chain runs to 240 residues: Large ribosomal subunit protein uL2 (240 aa).

Residues 1 to 12 (MGRRIQGQRRGR) are compositionally biased toward basic residues. Disordered stretches follow at residues 1–21 (MGRR…RAPS) and 198–240 (VDHP…GSNK). A compositionally biased stretch (basic and acidic residues) spans 221–231 (PPGRKVGDIAS).

The protein belongs to the universal ribosomal protein uL2 family. Part of the 50S ribosomal subunit. Forms a bridge to the 30S subunit in the 70S ribosome.

One of the primary rRNA binding proteins. Required for association of the 30S and 50S subunits to form the 70S ribosome, for tRNA binding and peptide bond formation. It has been suggested to have peptidyltransferase activity; this is somewhat controversial. Makes several contacts with the 16S rRNA in the 70S ribosome. The chain is Large ribosomal subunit protein uL2 from Halorubrum lacusprofundi (strain ATCC 49239 / DSM 5036 / JCM 8891 / ACAM 34).